A 270-amino-acid polypeptide reads, in one-letter code: Formamidopyrimidine-DNA glycosylase (270 aa).

P2 serves as the catalytic Schiff-base intermediate with DNA. Residue E3 is the Proton donor of the active site. K58 acts as the Proton donor; for beta-elimination activity in catalysis. H91, R110, and R151 together coordinate DNA. Residues 236–270 form an FPG-type zinc finger; that stretch reads LVYGRDGLPCPNCGRALKHATIGQRASVWCSHCQR. The Proton donor; for delta-elimination activity role is filled by R260.

It belongs to the FPG family. Monomer. It depends on Zn(2+) as a cofactor.

The enzyme catalyses Hydrolysis of DNA containing ring-opened 7-methylguanine residues, releasing 2,6-diamino-4-hydroxy-5-(N-methyl)formamidopyrimidine.. It carries out the reaction 2'-deoxyribonucleotide-(2'-deoxyribose 5'-phosphate)-2'-deoxyribonucleotide-DNA = a 3'-end 2'-deoxyribonucleotide-(2,3-dehydro-2,3-deoxyribose 5'-phosphate)-DNA + a 5'-end 5'-phospho-2'-deoxyribonucleoside-DNA + H(+). Its function is as follows. Involved in base excision repair of DNA damaged by oxidation or by mutagenic agents. Acts as a DNA glycosylase that recognizes and removes damaged bases. Has a preference for oxidized purines, such as 7,8-dihydro-8-oxoguanine (8-oxoG). Has AP (apurinic/apyrimidinic) lyase activity and introduces nicks in the DNA strand. Cleaves the DNA backbone by beta-delta elimination to generate a single-strand break at the site of the removed base with both 3'- and 5'-phosphates. The polypeptide is Formamidopyrimidine-DNA glycosylase (Stenotrophomonas maltophilia (strain R551-3)).